Reading from the N-terminus, the 165-residue chain is Cyclic pyranopterin monophosphate synthase (165 aa).

Substrate contacts are provided by residues 76–78 (LCH) and 119–120 (ME). Asp-134 is a catalytic residue.

The protein belongs to the MoaC family. In terms of assembly, homohexamer; trimer of dimers.

It carries out the reaction (8S)-3',8-cyclo-7,8-dihydroguanosine 5'-triphosphate = cyclic pyranopterin phosphate + diphosphate. Its pathway is cofactor biosynthesis; molybdopterin biosynthesis. Functionally, catalyzes the conversion of (8S)-3',8-cyclo-7,8-dihydroguanosine 5'-triphosphate to cyclic pyranopterin monophosphate (cPMP). This chain is Cyclic pyranopterin monophosphate synthase, found in Photobacterium profundum (strain SS9).